An 887-amino-acid polypeptide reads, in one-letter code: Probable LRR receptor-like serine/threonine-protein kinase At5g59680 (887 aa).

An N-terminal signal peptide occupies residues 1–23 (MERSLELLLLLIRTLAIIHISQA). At 25–510 (SQQGFISLDC…TKSGKSFPVT (486 aa)) the chain is on the extracellular side. N-linked (GlcNAc...) asparagine glycosylation is found at Asn143, Asn230, Asn256, Asn289, Asn338, Asn363, Asn400, Asn416, Asn432, Asn445, Asn464, and Asn471. LRR repeat units lie at residues 411 to 434 (RITT…QNLT), 435 to 457 (TLEK…LSNM), and 459 to 481 (SLLV…LQRK). The chain crosses the membrane as a helical span at residues 511-531 (IVASVGSAAILIVVLVLVLFL). Residues 532-887 (RKKKPSAVEV…FDAEMIPRAR (356 aa)) are Cytoplasmic-facing. Thr571 is modified (phosphothreonine). Positions 580–853 (NNFGRVVGEG…HVVIELKECL (274 aa)) constitute a Protein kinase domain. ATP is bound by residues 586 to 594 (VGEGGFGVV) and Lys608. Tyr653 is subject to Phosphotyrosine. The Proton acceptor role is filled by Asp705. At Ser739 the chain carries Phosphoserine. Phosphothreonine is present on residues Thr740 and Thr745. Position 753 is a phosphotyrosine (Tyr753).

It belongs to the protein kinase superfamily. Ser/Thr protein kinase family.

Its subcellular location is the membrane. It catalyses the reaction L-seryl-[protein] + ATP = O-phospho-L-seryl-[protein] + ADP + H(+). The enzyme catalyses L-threonyl-[protein] + ATP = O-phospho-L-threonyl-[protein] + ADP + H(+). The sequence is that of Probable LRR receptor-like serine/threonine-protein kinase At5g59680 from Arabidopsis thaliana (Mouse-ear cress).